A 647-amino-acid chain; its full sequence is Threonine--tRNA ligase (647 aa).

The TGS domain maps to 1–61; that stretch reads MINITFPDGA…TEDGSIEIVT (61 aa). The tract at residues 242–540 is catalytic; sequence DHRKLGKELD…LIENYKGAFP (299 aa). Zn(2+) contacts are provided by Cys336, His387, and His517.

The protein belongs to the class-II aminoacyl-tRNA synthetase family. Homodimer. Requires Zn(2+) as cofactor.

It localises to the cytoplasm. The catalysed reaction is tRNA(Thr) + L-threonine + ATP = L-threonyl-tRNA(Thr) + AMP + diphosphate + H(+). Catalyzes the attachment of threonine to tRNA(Thr) in a two-step reaction: L-threonine is first activated by ATP to form Thr-AMP and then transferred to the acceptor end of tRNA(Thr). Also edits incorrectly charged L-seryl-tRNA(Thr). The sequence is that of Threonine--tRNA ligase from Streptococcus pneumoniae serotype 19F (strain G54).